The primary structure comprises 180 residues: Insulin-like growth factor 2 (180 aa).

An N-terminal signal peptide occupies residues 1–24 (MGIPVGKSMLVLLISLAFALCCIA). Residues 25–52 (AYGPGETLCGGELVDTLQFVCSDRGFYF) are b. Intrachain disulfides connect Cys-33-Cys-71, Cys-45-Cys-84, and Cys-70-Cys-75. The c stretch occupies residues 53 to 64 (SRPSSRANRRSR). The interval 65-85 (GIVEECCFRSCDLALLETYCA) is a. Residues 86-91 (TPAKSE) form a d region. A propeptide spans 92 to 180 (RDVSTSQAVL…ASSEMSSNHQ (89 aa)) (e peptide). The segment at 157 to 180 (PLIVLPPKDPAHGGASSEMSSNHQ) is disordered.

The protein belongs to the insulin family. In terms of assembly, interacts with MYORG; this interaction is required for IGF2 secretion. Interacts with integrins ITGAV:ITGB3 and ITGA6:ITGB4; integrin-binding is required for IGF2 signaling. Interacts with IGFBP2. Proteolytically processed by PCSK4, proIGF2 is cleaved at Arg-128 and Arg-92 to generate big-IGF2 and mature IGF2. Expressed in the heart, blood serum, kidney and skeletal muscle including the tibialis anterior muscle.

Its subcellular location is the secreted. The insulin-like growth factors possess growth-promoting activity. Major fetal growth hormone in mammals. Plays a key role in regulating fetoplacental development. IGF2 is influenced by placental lactogen. Also involved in tissue differentiation. In adults, involved in glucose metabolism in adipose tissue, skeletal muscle and liver. Acts as a ligand for integrin which is required for IGF2 signaling. Positively regulates myogenic transcription factor MYOD1 function by facilitating the recruitment of transcriptional coactivators, thereby controlling muscle terminal differentiation. Inhibits myoblast differentiation and modulates metabolism via increasing the mitochondrial respiration rate. Functionally, preptin undergoes glucose-mediated co-secretion with insulin, and acts as a physiological amplifier of glucose-mediated insulin secretion. Exhibits osteogenic properties by increasing osteoblast mitogenic activity through phosphoactivation of MAPK1 and MAPK3. The protein is Insulin-like growth factor 2 of Mus musculus (Mouse).